The primary structure comprises 20 residues: Transcriptional regulatory protein PufK (20 aa).

Residues 1 to 11 show a composition bias toward basic residues; it reads MVPYRNPRHQH. A disordered region spans residues 1–20; the sequence is MVPYRNPRHQHVASVLRSGG.

Its function is as follows. Involved in the transcriptional regulation of pufB. The sequence is that of Transcriptional regulatory protein PufK (pufK) from Cereibacter sphaeroides (strain ATCC 17023 / DSM 158 / JCM 6121 / CCUG 31486 / LMG 2827 / NBRC 12203 / NCIMB 8253 / ATH 2.4.1.) (Rhodobacter sphaeroides).